A 668-amino-acid polypeptide reads, in one-letter code: DNA ligase (668 aa).

NAD(+)-binding positions include 37–41, 86–87, and Glu116; these read DAVYD and SM. The N6-AMP-lysine intermediate role is filled by Lys118. NAD(+) is bound by residues Arg139, Glu173, Lys288, and Lys312. Zn(2+)-binding residues include Cys406, Cys409, Cys424, and Cys429. The region spanning 590–668 is the BRCT domain; that stretch reads APDNFFKEKT…EQEAIAKIEK (79 aa).

The protein belongs to the NAD-dependent DNA ligase family. LigA subfamily. Mg(2+) is required as a cofactor. Mn(2+) serves as cofactor.

It carries out the reaction NAD(+) + (deoxyribonucleotide)n-3'-hydroxyl + 5'-phospho-(deoxyribonucleotide)m = (deoxyribonucleotide)n+m + AMP + beta-nicotinamide D-nucleotide.. Its function is as follows. DNA ligase that catalyzes the formation of phosphodiester linkages between 5'-phosphoryl and 3'-hydroxyl groups in double-stranded DNA using NAD as a coenzyme and as the energy source for the reaction. It is essential for DNA replication and repair of damaged DNA. This Lactobacillus gasseri (strain ATCC 33323 / DSM 20243 / BCRC 14619 / CIP 102991 / JCM 1131 / KCTC 3163 / NCIMB 11718 / NCTC 13722 / AM63) protein is DNA ligase.